Reading from the N-terminus, the 428-residue chain is Probable mitochondrial adenine nucleotide transporter BTL3 (428 aa).

Solcar repeat units lie at residues 129-212, 222-307, and 336-421; these read LNTT…YRGQ, TTNF…LKSA, and LGPM…MKVV. 6 helical membrane passes run 132-152, 187-207, 228-248, 283-303, 342-362, and 390-410; these read TKHL…IAPL, GNLV…YAYD, FVAG…LDTI, LVPS…VYDI, LLYG…FEVV, and VPAL…SAAI.

The protein belongs to the mitochondrial carrier (TC 2.A.29) family.

Its subcellular location is the mitochondrion inner membrane. In terms of biological role, probable mitochondrial adenylate carrier that catalyzes the transport of ATP, ADP and AMP. The sequence is that of Probable mitochondrial adenine nucleotide transporter BTL3 from Arabidopsis thaliana (Mouse-ear cress).